Reading from the N-terminus, the 495-residue chain is Cytoplasmic alpha-amylase (495 aa).

Ca(2+)-binding residues include N104 and D198. Catalysis depends on D235, which acts as the Nucleophile. H239 provides a ligand contact to Ca(2+). E265 functions as the Proton donor in the catalytic mechanism.

This sequence belongs to the glycosyl hydrolase 13 family. Monomer. Ca(2+) is required as a cofactor.

The protein resides in the cytoplasm. It catalyses the reaction Endohydrolysis of (1-&gt;4)-alpha-D-glucosidic linkages in polysaccharides containing three or more (1-&gt;4)-alpha-linked D-glucose units.. The chain is Cytoplasmic alpha-amylase (amyA) from Escherichia coli (strain K12).